Consider the following 128-residue polypeptide: uncharacterized protein (128 aa).

3 helical membrane passes run 1–21, 51–71, and 76–96; these read MLVFSFLFVVVSINLNALIFL, VRVEAIAPFMMCLGSLGAILG, and ANFLLLSYNVINNPVVLVYYV.

Its subcellular location is the membrane. This is an uncharacterized protein from Saccharomyces cerevisiae (strain ATCC 204508 / S288c) (Baker's yeast).